Reading from the N-terminus, the 138-residue chain is DNA-directed RNA polymerase subunit omega (138 aa).

The interval 101-138 (AEDDDTLEADGLTIHDGADSDLDLSDDAGQDTDEADED) is disordered. Acidic residues predominate over residues 119–138 (DSDLDLSDDAGQDTDEADED).

It belongs to the RNA polymerase subunit omega family. In terms of assembly, the RNAP catalytic core consists of 2 alpha, 1 beta, 1 beta' and 1 omega subunit. When a sigma factor is associated with the core the holoenzyme is formed, which can initiate transcription.

It carries out the reaction RNA(n) + a ribonucleoside 5'-triphosphate = RNA(n+1) + diphosphate. Its function is as follows. Promotes RNA polymerase assembly. Latches the N- and C-terminal regions of the beta' subunit thereby facilitating its interaction with the beta and alpha subunits. The protein is DNA-directed RNA polymerase subunit omega of Rhodospirillum rubrum (strain ATCC 11170 / ATH 1.1.1 / DSM 467 / LMG 4362 / NCIMB 8255 / S1).